The chain runs to 284 residues: Nucleotide-binding protein NMB0738 (284 aa).

ATP is bound at residue 8–15 (GLSGSGKS). 58 to 61 (DVRS) lines the GTP pocket.

This sequence belongs to the RapZ-like family.

Functionally, displays ATPase and GTPase activities. The sequence is that of Nucleotide-binding protein NMB0738 from Neisseria meningitidis serogroup B (strain ATCC BAA-335 / MC58).